Reading from the N-terminus, the 650-residue chain is Laccase-like multicopper oxidase 1 (650 aa).

The signal sequence occupies residues 1–20; it reads MLLSKLSILLAKWLSVAVYA. Plastocyanin-like domains lie at 41-151, 162-360, and 439-595; these read QVPS…IVED, ERIL…LRYN, and KPVL…VVGD. A disulfide bridge connects residues Cys46 and Cys254. N-linked (GlcNAc...) asparagine glycosylation is found at Asn55 and Asn83. Cu cation is bound by residues His87, His89, His133, and His135. 7 residues coordinate Cu cation: His501, His504, His506, His576, Cys577, His578, and His582. N-linked (GlcNAc...) asparagine glycosylation is present at Asn620.

Belongs to the multicopper oxidase family. As to quaternary structure, monomer. N-glycosylation Asn-55 and Asn-83 is involved in folding, conformational stability and laccase activity.

It catalyses the reaction 2 2',3,4-trihydroxy-trans-chalcone + O2 + 2 H(+) = 2 3',4'-dihydroxyaurone + 2 H2O. Retains almost half of its activity in presence of high salt concentrations up to 100 mM NaCl. Retains also more than 85% of its original activity in the presence of 1 mM EDTA, indicating a satisfactory resistance towards chelators, which is rare among metal-containing enzyme. The activity drops significantly in the presence of NaN(3) or SDS. Appears more active in the presence of methanol compared to ethanol, but acetone or DMSO addition severely affect remaining laccase activity. In terms of biological role, yellow laccase-like multicopper oxidase that is able to oxidize a variety of phenolic compounds including standard laccase substrates such as 2'-azino-bis(3-ethylbenzothiazoline-6-sulphonic acid) (ABTS) and 2,6-dimethoxyphenol (2,6-DMP). The existence of an ortho-hydroxy group is crucial for oxidation since pyrogallol and catechol, which contain ortho-hydroxy groups, are readily oxidized, which is not the case for resorcinol and hydroquinone, that contain meta- and para-hydroxy groups, respectively. The same is also true for the existence of a methoxy group in an ortho-position, since 2,6-DMP, guaiacol and ferulic and caffeic acids are also rather easily oxidized compared with the corresponding unsubstituted compound. Can be used for the bioconversion of 2',3,4-trihy-droxychalcone to 3',4'-dihydroxy-aurone, a bioactive aurone recently shown to possess inhibitory activity against several isoforms of the histone deacetylase complex (HDAC). The protein is Laccase-like multicopper oxidase 1 of Thermothelomyces thermophilus (strain ATCC 42464 / BCRC 31852 / DSM 1799) (Sporotrichum thermophile).